A 935-amino-acid polypeptide reads, in one-letter code: Progesterone receptor (935 aa).

The tract at residues 1-49 (MTELKAKGLRAPHVAGSPSSPKVGSPLPCRQATGQFPGSQTSDTLPEVS) is disordered. The interval 1 to 164 (MTELKAKGLR…PATQRVLSPL (164 aa)) is AF3; mediates transcriptional activation. The tract at residues 1-568 (MTELKAKGLR…YSFESLPQKI (568 aa)) is modulating, Pro-Rich. At S20 the chain carries Phosphoserine. The segment covering 32–44 (ATGQFPGSQTSDT) has biased composition (polar residues). The LXXL motif 1 motif lies at 55-59 (LDGLL). Residues 62–158 (RICQAQDPPD…EDPPAAPATQ (97 aa)) are disordered. The residue at position 81 (S81) is a Phosphoserine. Positions 115 to 119 (LDTLW) match the LXXL motif 2 motif. S130 and S162 each carry phosphoserine. The tract at residues 165–305 (MSRSGGKAGD…LATTVTDFIH (141 aa)) is mediates transcriptional transrepression. The Nuclear localization signal signature appears at 183 to 187 (KVLPR). The interval 187-233 (RGLSPSRQLLLPTSGSPHWSGAPVKPSPQPAAVEVEEEDGSESEDSA) is disordered. S190 carries the phosphoserine modification. The segment covering 191-203 (PSRQLLLPTSGSP) has biased composition (polar residues). A Phosphoserine modification is found at S213. A compositionally biased stretch (acidic residues) spans 220-231 (EVEEEDGSESED). At S294 the chain carries Phosphoserine; by MAPK1. The interval 328 to 365 (SYDGGSGAASAFAPPRSSPSASSTPVPGSDFPDCAYAP) is disordered. Low complexity predominate over residues 335 to 356 (AASAFAPPRSSPSASSTPVPGS). S345 bears the Phosphoserine; by MAPK mark. K388 participates in a covalent cross-link: Glycyl lysine isopeptide (Lys-Gly) (interchain with G-Cter in SUMO); alternate. K388 participates in a covalent cross-link: Glycyl lysine isopeptide (Lys-Gly) (interchain with G-Cter in ubiquitin); alternate. The segment at 390-452 (EEEGAEASTR…PASASVSSAS (63 aa)) is disordered. The residue at position 400 (S400) is a Phosphoserine; by CDK2. Pro residues predominate over residues 418–433 (PLGPPPPLPPRAPPSR). Residues 434–452 (PGEAAVTAAPASASVSSAS) show a composition bias toward low complexity. The tract at residues 456–548 (STLECILYKA…VYPPYLNYLR (93 aa)) is AF1; mediates transcriptional activation. K533 participates in a covalent cross-link: Glycyl lysine isopeptide (Lys-Gly) (interchain with G-Cter in SUMO). NR C4-type zinc fingers lie at residues 569–589 (CLICGDEASGCHYGVLTCGSC) and 605–629 (CAGRNDCIVDKIRRKNCPACRLRKC). Positions 569–641 (CLICGDEASG…AGMVLGGRKF (73 aa)) form a DNA-binding region, nuclear receptor. S678 is subject to Phosphoserine. Positions 681-915 (QDIQLIPPLI…EFPEMMSEVI (235 aa)) constitute an NR LBD domain. An AF2; mediates transcriptional activation region spans residues 689–935 (LINLLLSIEP…MVKPLLFHKK (247 aa)). R768 is a binding site for progesterone.

It belongs to the nuclear hormone receptor family. As to quaternary structure, interacts with SMARD1 and UNC45A. Interacts with CUEDC2; the interaction promotes ubiquitination, decreases sumoylation, and represses transcriptional activity. Interacts with PIAS3; the interaction promotes sumoylation of PR in a hormone-dependent manner, inhibits DNA-binding, and alters nuclear export. Interacts with SP1; the interaction requires ligand-induced phosphorylation on Ser-345 by ERK1/2-MAPK. Interacts with PRMT2. Interacts with NCOA2 and NCOA1. Interacts with KLF9. Interacts with GTF2B. Post-translationally, phosphorylated on multiple serine sites. Several of these sites are hormone-dependent. Phosphorylation on Ser-294 is highly hormone-dependent and modulates ubiquitination and sumoylation on Lys-388. Phosphorylation on Ser-345 also requires induction by hormone. Basal phosphorylation on Ser-81, Ser-162, Ser-190 and Ser-400 is increased in response to progesterone and can be phosphorylated in vitro by the CDK2-A1 complex. Increased levels of phosphorylation on Ser-400 also in the presence of EGF, heregulin, IGF, PMA and FBS. Phosphorylation at this site by CDK2 is ligand-independent, and increases nuclear translocation and transcriptional activity. Phosphorylation at Ser-162 and Ser-294, but not at Ser-190, is impaired during the G(2)/M phase of the cell cycle. Phosphorylation on Ser-345 by ERK1/2 MAPK is required for interaction with SP1. Sumoylation is hormone-dependent and represses transcriptional activity. Sumoylation on all three sites is enhanced by PIAS3. Desumoylated by SENP1. Sumoylation on Lys-388, the main site of sumoylation, is repressed by ubiquitination on the same site, and modulated by phosphorylation at Ser-294. In terms of processing, ubiquitination is hormone-dependent and represses sumoylation on the same site. Promoted by MAPK-mediated phosphorylation on Ser-294. Ubiquitinated by UBR5, leading to its degradation: UBR5 specifically recognizes and binds ligand-bound PGR when it is not associated with coactivators (NCOAs). In presence of NCOAs, the UBR5-degron is not accessible, preventing its ubiquitination and degradation. Post-translationally, palmitoylated by ZDHHC7 and ZDHHC21. Palmitoylation is required for plasma membrane targeting and for rapid intracellular signaling via ERK and AKT kinases and cAMP generation.

The protein resides in the nucleus. It localises to the cytoplasm. In terms of biological role, the steroid hormones and their receptors are involved in the regulation of eukaryotic gene expression and affect cellular proliferation and differentiation in target tissues. Transcriptional activator of several progesteron-dependent promoters in a variety of cell types. Involved in activation of SRC-dependent MAPK signaling on hormone stimulation. This is Progesterone receptor (PGR) from Sapajus apella (Brown-capped capuchin).